The primary structure comprises 274 residues: MILEKISDPQKYISHHLSHLQIDLRSFKIIQPGALSSDYWTVNVDSMFFSLVLGSFFLSIFYMVGKKITQGIPGKLQTAIELIFEFVNLNVKSMYQGKNALIAPLSLTVFIWVFLMNLMDLVPIDFFPFISEKVFELPAMRIVPSADINITLSMSLGVFFLILFYTVKIKGYVGFLKELILQPFNHPVFSIFNFILEFVSLVSKPISLGLRLFGNMYAGEMIFILIAGLLPWWTQCFLNVPWAIFHILIISLQAFIFMVLTIVYLSMASQSHKD.

Transmembrane regions (helical) follow at residues 44–64 (VDSM…FYMV), 110–130 (FIWV…FPFI), 142–164 (IVPS…LILF), 212–232 (LFGN…LLPW), and 243–263 (AIFH…LTIV).

Belongs to the ATPase A chain family. As to quaternary structure, F-type ATPases have 2 components, CF(1) - the catalytic core - and CF(0) - the membrane proton channel. CF(1) has five subunits: alpha(3), beta(3), gamma(1), delta(1), epsilon(1). CF(0) has three main subunits: a(1), b(2) and c(9-12). The alpha and beta chains form an alternating ring which encloses part of the gamma chain. CF(1) is attached to CF(0) by a central stalk formed by the gamma and epsilon chains, while a peripheral stalk is formed by the delta and b chains.

Its subcellular location is the cell membrane. In terms of biological role, key component of the proton channel; it plays a direct role in the translocation of protons across the membrane. This is ATP synthase subunit a from Buchnera aphidicola subsp. Acyrthosiphon pisum (strain APS) (Acyrthosiphon pisum symbiotic bacterium).